The following is a 405-amino-acid chain: Farnesyl pyrophosphate synthase (405 aa).

Asp158 and Asp162 together coordinate Mg(2+). The DDXXD motif motif lies at 158-162; sequence DDLAD.

This sequence belongs to the FPP/GGPP synthase family. The cofactor is Mg(2+).

The catalysed reaction is isopentenyl diphosphate + (2E)-geranyl diphosphate = (2E,6E)-farnesyl diphosphate + diphosphate. The protein operates within pheromone biosynthesis. Functionally, farnesyl pyrophosphate synthase involved in murgantiol biosynthesis, a male-released aggregation pheromone, by catalyzing the formation of (2E,6E)-farnesyl diphosphate. The polypeptide is Farnesyl pyrophosphate synthase (Murgantia histrionica (Harlequin bug)).